Here is a 254-residue protein sequence, read N- to C-terminus: MNLTDKTVLITGGASGIGYAAVQAFLNQQANVVVADIDEAQGEAMIRKENNDRLHFVQTDITNEPACQNAILSAVDKFGGLDVLINNAGIEIVAPIHEMELSDWNKVLNVNLTGMFLMSKHALKYMLKSGKGNIINTCSVGGVVAWPDIPAYNASKGGVLQTDAFYRPSIIAKHNIRVNCVCPGIIDTPLNEKSFLENNEGTLEEIKKEKAKVNPLLRLGKPEEIANVMLFLASDLSSYMTGSAITADGGYTAQ.

9-31 (LITGGASGIGYAAVQAFLNQQAN) contacts NAD(+). Position 139 (Ser-139) interacts with substrate. The active-site Proton acceptor is Tyr-152.

This sequence belongs to the short-chain dehydrogenases/reductases (SDR) family.

It carries out the reaction L-dihydroanticapsin + NAD(+) = L-anticapsin + NADH + H(+). It functions in the pathway antibiotic biosynthesis; bacilysin biosynthesis. Functionally, part of the bacABCDEFG operon responsible for the biosynthesis of bacilysin, an irreversible inactivator of the glutaminase domain of glucosamine synthetase. Catalyzes the dehydrogenation of the C7-hydroxyl group in the 4S-tetrahydrotyrosine (4S-H4Tyr) to yield anticapsin (epoxycyclohexanonyl-Ala). This is Dihydroanticapsin 7-dehydrogenase from Bacillus amyloliquefaciens (Bacillus velezensis).